The chain runs to 1003 residues: Rho-associated protein kinase 1 (1003 aa).

The tract at residues 1-28 is disordered; that stretch reads VAPVVPDLSSDIDTSNFDDLEEDKGEEE. The AGC-kinase C-terminal domain occupies 1–58; that stretch reads VAPVVPDLSSDIDTSNFDDLEEDKGEEETFPIPKAFVGNQLPFVGFTYYSNRRYLSSA. Residues 16–28 show a composition bias toward acidic residues; sequence NFDDLEEDKGEEE. The segment at 17 to 376 is interaction with FHOD1; that stretch reads FDDLEEDKGE…KKLKEEREAR (360 aa). The stretch at 71-341 forms a coiled coil; it reads KSLQESLQKT…RLEQEVNEHK (271 aa). Positions 128 to 205 constitute an REM-1 domain; that stretch reads STVSQIEKEK…LEEANDLLRT (78 aa). The residue at position 296 (Lys-296) is an N6-acetyllysine. Residues 356-595 form an SHROOM3 binding region; it reads EAKSVAMCEM…TVSRLEEANS (240 aa). A RhoBD domain is found at 598–664; the sequence is TKDIEILRRE…LAEIMNRKDF (67 aa). The segment at 647–659 is RHOA binding; sequence LKTQAVNKLAEIM. Residues 660–751 adopt a coiled-coil conformation; the sequence is NRKDFKIDRK…KLLDLSDSTS (92 aa). 2 positions are modified to phosphoserine: Ser-754 and Ser-757. The segment at 764 to 1003 is auto-inhibitory; that stretch reads NLPESRIEGW…VVKNTSGKTR (240 aa). One can recognise a PH domain in the interval 767–966; the sequence is ESRIEGWLSV…WVTHLVKKIP (200 aa). The Phorbol-ester/DAG-type zinc-finger motif lies at 877-930; the sequence is GHEFIPTLYHFPANCDACAKPLWHVFKPPPALECRRCHVKCHRDHLDKKEDLIC. Positions 968 to 1003 are disordered; it reads NPPSGFVRASPRTLSTRSTANQSFRKVVKNTSGKTR. Ser-977 bears the Phosphoserine mark. Over residues 979-1003 the composition is skewed to polar residues; the sequence is RTLSTRSTANQSFRKVVKNTSGKTR.

The protein belongs to the protein kinase superfamily. AGC Ser/Thr protein kinase family. In terms of assembly, homodimer. Interacts with RHOA (activated by GTP), RHOB, RHOC, GEM, MYLC2B, RHOE, PPP1R12A, LIMK1, LIMK2, TSG101, CHORDC1, DAPK3, PFN1, PTEN and JIP3. Interacts with ITGB1BP1 (via N-terminus and PTB domain). Interacts with FHOD1 in a Src-dependent manner. Interacts with SHROOM3. It depends on Mg(2+) as a cofactor. Autophosphorylated on serine and threonine residues. Post-translationally, cleaved by caspase-3 during apoptosis. This leads to constitutive activation of the kinase and membrane blebbing.

The protein resides in the cytoplasm. It is found in the cytoskeleton. The protein localises to the microtubule organizing center. It localises to the centrosome. Its subcellular location is the centriole. The protein resides in the golgi apparatus membrane. It is found in the cell projection. The protein localises to the bleb. It localises to the cell membrane. Its subcellular location is the lamellipodium. The protein resides in the ruffle. The catalysed reaction is L-seryl-[protein] + ATP = O-phospho-L-seryl-[protein] + ADP + H(+). It catalyses the reaction L-threonyl-[protein] + ATP = O-phospho-L-threonyl-[protein] + ADP + H(+). Its activity is regulated as follows. Activated by RHOA binding. Inhibited by Y-27632. In terms of biological role, protein kinase which is a key regulator of actin cytoskeleton and cell polarity. Involved in regulation of smooth muscle contraction, actin cytoskeleton organization, stress fiber and focal adhesion formation, neurite retraction, cell adhesion and motility via phosphorylation of DAPK3, GFAP, LIMK1, LIMK2, MYL9/MLC2, TPPP, PFN1 and PPP1R12A. Phosphorylates FHOD1 and acts synergistically with it to promote SRC-dependent non-apoptotic plasma membrane blebbing. Phosphorylates JIP3 and regulates the recruitment of JNK to JIP3 upon UVB-induced stress. Acts as a suppressor of inflammatory cell migration by regulating PTEN phosphorylation and stability. Acts as a negative regulator of VEGF-induced angiogenic endothelial cell activation. Required for centrosome positioning and centrosome-dependent exit from mitosis. Plays a role in terminal erythroid differentiation. May regulate closure of the eyelids and ventral body wall by inducing the assembly of actomyosin bundles. Promotes keratinocyte terminal differentiation. Involved in osteoblast compaction through the fibronectin fibrillogenesis cell-mediated matrix assembly process, essential for osteoblast mineralization. In Pan troglodytes (Chimpanzee), this protein is Rho-associated protein kinase 1 (ROCK1).